The following is a 375-amino-acid chain: Chaperone protein DnaJ (375 aa).

The region spanning Asp5–Gly70 is the J domain. The CR-type zinc finger occupies Gly134–Tyr212. Positions 147, 150, 164, 167, 186, 189, 200, and 203 each coordinate Zn(2+). CXXCXGXG motif repeat units lie at residues Cys147 to Gly154, Cys164 to Gly171, Cys186 to Gly193, and Cys200 to Gly207.

Belongs to the DnaJ family. Homodimer. It depends on Zn(2+) as a cofactor.

It localises to the cytoplasm. Functionally, participates actively in the response to hyperosmotic and heat shock by preventing the aggregation of stress-denatured proteins and by disaggregating proteins, also in an autonomous, DnaK-independent fashion. Unfolded proteins bind initially to DnaJ; upon interaction with the DnaJ-bound protein, DnaK hydrolyzes its bound ATP, resulting in the formation of a stable complex. GrpE releases ADP from DnaK; ATP binding to DnaK triggers the release of the substrate protein, thus completing the reaction cycle. Several rounds of ATP-dependent interactions between DnaJ, DnaK and GrpE are required for fully efficient folding. Also involved, together with DnaK and GrpE, in the DNA replication of plasmids through activation of initiation proteins. The chain is Chaperone protein DnaJ from Pseudomonas entomophila (strain L48).